The chain runs to 360 residues: Photosystem II protein D1 (360 aa).

Transmembrane regions (helical) follow at residues 29 to 46, 118 to 133, and 142 to 156; these read YIGW…TATS, HFLL…EWEL, and WIFV…AASA. Histidine 118 is a chlorophyll a binding site. Tyrosine 126 is a binding site for pheophytin a. Residues aspartate 170 and glutamate 189 each contribute to the [CaMn4O5] cluster site. Residues 197–218 form a helical membrane-spanning segment; it reads FHMAGVAGVFGGSLFSAMHGSL. A chlorophyll a-binding site is contributed by histidine 198. A quinone-binding positions include histidine 215 and 264 to 265; that span reads SF. A Fe cation-binding site is contributed by histidine 215. Histidine 272 is a binding site for Fe cation. Residues 274 to 288 traverse the membrane as a helical segment; sequence FLALWPVLGIWLTAM. [CaMn4O5] cluster contacts are provided by histidine 332, glutamate 333, aspartate 342, and alanine 344. Positions 345–360 are excised as a propeptide; it reads SGDVLPVAFTAPAVNA.

Belongs to the reaction center PufL/M/PsbA/D family. PSII is composed of 1 copy each of membrane proteins PsbA, PsbB, PsbC, PsbD, PsbE, PsbF, PsbH, PsbI, PsbJ, PsbK, PsbL, PsbM, PsbT, PsbX, PsbY, PsbZ, Psb30/Ycf12, at least 3 peripheral proteins of the oxygen-evolving complex and a large number of cofactors. It forms dimeric complexes. The D1/D2 heterodimer binds P680, chlorophylls that are the primary electron donor of PSII, and subsequent electron acceptors. It shares a non-heme iron and each subunit binds pheophytin, quinone, additional chlorophylls, carotenoids and lipids. D1 provides most of the ligands for the Mn4-Ca-O5 cluster of the oxygen-evolving complex (OEC). There is also a Cl(-1) ion associated with D1 and D2, which is required for oxygen evolution. The PSII complex binds additional chlorophylls, carotenoids and specific lipids. is required as a cofactor. In terms of processing, tyr-161 forms a radical intermediate that is referred to as redox-active TyrZ, YZ or Y-Z. C-terminally processed by CTPA; processing is essential to allow assembly of the oxygen-evolving complex and thus photosynthetic growth.

The protein localises to the plastid. The protein resides in the chloroplast thylakoid membrane. The catalysed reaction is 2 a plastoquinone + 4 hnu + 2 H2O = 2 a plastoquinol + O2. Functionally, photosystem II (PSII) is a light-driven water:plastoquinone oxidoreductase that uses light energy to abstract electrons from H(2)O, generating O(2) and a proton gradient subsequently used for ATP formation. It consists of a core antenna complex that captures photons, and an electron transfer chain that converts photonic excitation into a charge separation. The D1/D2 (PsbA/PsbD) reaction center heterodimer binds P680, the primary electron donor of PSII as well as several subsequent electron acceptors. In Thalassiosira pseudonana (Marine diatom), this protein is Photosystem II protein D1.